Here is a 271-residue protein sequence, read N- to C-terminus: 4-diphosphocytidyl-2-C-methyl-D-erythritol kinase (271 aa).

Residue Lys17 is part of the active site. Residue 97-107 coordinates ATP; sequence PVGSGLGGGSS. The active site involves Asp137.

Belongs to the GHMP kinase family. IspE subfamily.

The enzyme catalyses 4-CDP-2-C-methyl-D-erythritol + ATP = 4-CDP-2-C-methyl-D-erythritol 2-phosphate + ADP + H(+). The protein operates within isoprenoid biosynthesis; isopentenyl diphosphate biosynthesis via DXP pathway; isopentenyl diphosphate from 1-deoxy-D-xylulose 5-phosphate: step 3/6. Functionally, catalyzes the phosphorylation of the position 2 hydroxy group of 4-diphosphocytidyl-2C-methyl-D-erythritol. The chain is 4-diphosphocytidyl-2-C-methyl-D-erythritol kinase from Thermotoga petrophila (strain ATCC BAA-488 / DSM 13995 / JCM 10881 / RKU-1).